Consider the following 524-residue polypeptide: Peptide chain release factor 3 (524 aa).

The 269-residue stretch at 8–276 (NKRRTFAIIS…GFAKYAPAPE (269 aa)) folds into the tr-type G domain. Residues 17–24 (SHPDAGKT), 85–89 (DTPGH), and 139–142 (NKLD) contribute to the GTP site.

Belongs to the TRAFAC class translation factor GTPase superfamily. Classic translation factor GTPase family. PrfC subfamily.

The protein localises to the cytoplasm. Increases the formation of ribosomal termination complexes and stimulates activities of RF-1 and RF-2. It binds guanine nucleotides and has strong preference for UGA stop codons. It may interact directly with the ribosome. The stimulation of RF-1 and RF-2 is significantly reduced by GTP and GDP, but not by GMP. The sequence is that of Peptide chain release factor 3 from Hydrogenovibrio crunogenus (strain DSM 25203 / XCL-2) (Thiomicrospira crunogena).